The following is a 951-amino-acid chain: Leucine-rich repeat-containing G-protein coupled receptor 4 (951 aa).

The N-terminal stretch at 1 to 24 is a signal peptide; it reads MPGPLRLLCFFALGLLGSAGPSGA. The LRRNT domain occupies 25–57; that stretch reads APPLCAAPCSCDGDRRVDCSGKGLTAVPEGLSA. Over 25-544 the chain is Extracellular; that stretch reads APPLCAAPCS…LLGSWMIRLT (520 aa). Cystine bridges form between Cys29–Cys35 and Cys33–Cys43. LRR repeat units lie at residues 58–79, 82–103, 106–127, 130–151, 154–177, 178–199, 202–223, 226–247, 249–270, and 273–294; these read FTQALDISMNNITQLPEDAFKS, FLEELQLAGNDLSFIHPKALSG, ELKVLTLQNNQLRTVPSEAIHG, ALQSLRLDANHITSVPEDSFEG, QLRHLWLDDNSLTEVPVRPLSNLP, TLQALTLALNNISSIPDFAFTN, SLVVLHLHNNKIKSLSQHCFDG, NLETLDLNYNNLDEFPQAIKAL, SLKELGFHSNSISVIPDGAFGG, and LLRTIHLYDNPLSFVGNSAFHN. Asn68 carries an N-linked (GlcNAc...) asparagine glycan. N-linked (GlcNAc...) asparagine glycans are attached at residues Asn188 and Asn199. N-linked (GlcNAc...) asparagine glycosylation is found at Asn294 and Asn314. LRR repeat units follow at residues 320–341, 344–365, 366–387, 390–411, and 414–435; these read HLESLTLTGTKISSIPDDLCQN, MLRTLDLSYNNIRDLPSFNGCR, ALEEISLQRNQISLIKENTFQG, SLRILDLSRNLIREIHSGAFAK, and TITNLDVSFNELTSFPTEGLNG. Cys339 and Cys364 are disulfide-bonded. 2 cysteine pairs are disulfide-bonded: Cys470-Cys522 and Cys471-Cys476. A glycan (N-linked (GlcNAc...) asparagine) is linked at Asn505. The helical transmembrane segment at 545–565 threads the bilayer; it reads VWFIFLVALLFNLLVILTVFA. Over 566 to 575 the chain is Cytoplasmic; that stretch reads SCSSLPASKL. The chain crosses the membrane as a helical span at residues 576–596; that stretch reads FIGLISVSNLLMGIYTGILTF. Residues 597-619 lie on the Extracellular side of the membrane; it reads LDAVSWGRFAEFGIWWETGSGCK. A disulfide bridge links Cys618 with Cys693. The chain crosses the membrane as a helical span at residues 620-640; sequence VAGSLAVFSSESAVFLLTLAA. At 641 to 661 the chain is on the cytoplasmic side; that stretch reads VERSVFAKDLMKHGKSSHLRQ. Residues 662–682 traverse the membrane as a helical segment; it reads FQVAALLALLGAAVAGCFPLF. At 683 to 703 the chain is on the extracellular side; sequence HGGQYSASPLCLPFPTGETPS. The helical transmembrane segment at 704–724 threads the bilayer; sequence LGFTVTLVLLNSLAFLLMAII. Residues 725-756 lie on the Cytoplasmic side of the membrane; that stretch reads YTKLYCNLEKEDLSENSQSSVIKHVAWLIFTN. The chain crosses the membrane as a helical span at residues 757-777; the sequence is CIFFCPVAFFSFAPLITAISI. Residues 778–783 are Extracellular-facing; the sequence is SPEIMK. Residues 784–804 traverse the membrane as a helical segment; sequence SVTLIFFPLPACLNPVLYVFF. Residues 805 to 951 lie on the Cytoplasmic side of the membrane; sequence NPKFKEDWKL…YAYNLQRVRD (147 aa). Position 920 is a phosphoserine (Ser920).

Belongs to the G-protein coupled receptor 1 family.

Its subcellular location is the cell membrane. In terms of biological role, receptor for R-spondins that potentiates the canonical Wnt signaling pathway and is involved in the formation of various organs. Upon binding to R-spondins (RSPO1, RSPO2, RSPO3 or RSPO4), associates with phosphorylated LRP6 and frizzled receptors that are activated by extracellular Wnt receptors, triggering the canonical Wnt signaling pathway to increase expression of target genes. In contrast to classical G-protein coupled receptors, does not activate heterotrimeric G-proteins to transduce the signal. Its function as activator of the Wnt signaling pathway is required for the development of various organs, including liver, kidney, intestine, bone, reproductive tract and eye. May also act as a receptor for norrin (NDP), such results however require additional confirmation in vivo. Required during spermatogenesis to activate the Wnt signaling pathway in peritubular myoid cells. Required for the maintenance of intestinal stem cells and Paneth cell differentiation in postnatal intestinal crypts. Acts as a regulator of bone formation and remodeling. Involved in kidney development; required for maintaining the ureteric bud in an undifferentiated state. Involved in the development of the anterior segment of the eye. Required during erythropoiesis. Also acts as a negative regulator of innate immunity by inhibiting TLR2/TLR4 associated pattern-recognition and pro-inflammatory cytokine production. Plays an important role in regulating the circadian rhythms of plasma lipids, partially through regulating the rhythmic expression of MTTP. Required for proper development of GnRH neurons (gonadotropin-releasing hormone expressing neurons) that control the release of reproductive hormones from the pituitary gland. This chain is Leucine-rich repeat-containing G-protein coupled receptor 4 (Lgr4), found in Rattus norvegicus (Rat).